Reading from the N-terminus, the 89-residue chain is Meiosis expressed gene 1 protein homolog (89 aa).

Belongs to the MEIG1 family.

The sequence is that of Meiosis expressed gene 1 protein homolog from Nematostella vectensis (Starlet sea anemone).